The chain runs to 314 residues: tRNA dimethylallyltransferase (314 aa).

Residue Gly13 to Ser20 participates in ATP binding. Thr15 to Ser20 contacts substrate. Interaction with substrate tRNA regions lie at residues Asp38–Gln41 and Gln161–Arg165.

The protein belongs to the IPP transferase family. In terms of assembly, monomer. Requires Mg(2+) as cofactor.

It catalyses the reaction adenosine(37) in tRNA + dimethylallyl diphosphate = N(6)-dimethylallyladenosine(37) in tRNA + diphosphate. Functionally, catalyzes the transfer of a dimethylallyl group onto the adenine at position 37 in tRNAs that read codons beginning with uridine, leading to the formation of N6-(dimethylallyl)adenosine (i(6)A). The polypeptide is tRNA dimethylallyltransferase (Parvibaculum lavamentivorans (strain DS-1 / DSM 13023 / NCIMB 13966)).